A 149-amino-acid chain; its full sequence is Putative prefoldin subunit alpha (149 aa).

Belongs to the prefoldin subunit alpha family.

It localises to the cytoplasm. Molecular chaperone capable of stabilizing a range of proteins. This is Putative prefoldin subunit alpha from Aquifex aeolicus (strain VF5).